We begin with the raw amino-acid sequence, 187 residues long: UPF0301 protein PC1_3712 (187 aa).

It belongs to the UPF0301 (AlgH) family.

This Pectobacterium carotovorum subsp. carotovorum (strain PC1) protein is UPF0301 protein PC1_3712.